The following is a 258-amino-acid chain: Acyl-[acyl-carrier-protein]--UDP-N-acetylglucosamine O-acyltransferase (258 aa).

It belongs to the transferase hexapeptide repeat family. LpxA subfamily. As to quaternary structure, homotrimer.

Its subcellular location is the cytoplasm. It carries out the reaction a (3R)-hydroxyacyl-[ACP] + UDP-N-acetyl-alpha-D-glucosamine = a UDP-3-O-[(3R)-3-hydroxyacyl]-N-acetyl-alpha-D-glucosamine + holo-[ACP]. It participates in glycolipid biosynthesis; lipid IV(A) biosynthesis; lipid IV(A) from (3R)-3-hydroxytetradecanoyl-[acyl-carrier-protein] and UDP-N-acetyl-alpha-D-glucosamine: step 1/6. Its function is as follows. Involved in the biosynthesis of lipid A, a phosphorylated glycolipid that anchors the lipopolysaccharide to the outer membrane of the cell. The protein is Acyl-[acyl-carrier-protein]--UDP-N-acetylglucosamine O-acyltransferase of Pseudomonas fluorescens (strain ATCC BAA-477 / NRRL B-23932 / Pf-5).